Consider the following 404-residue polypeptide: Immediate early response gene 5-like protein (404 aa).

Disordered regions lie at residues 86-107, 160-231, and 308-327; these read AADF…EPAA, AALQ…APAS, and QEEE…EPPG. Positions 177 to 194 are enriched in pro residues; that stretch reads PLQPGPAPLPLPLPPPAP. Positions 195–231 are enriched in low complexity; that stretch reads AALCPRDPRAPAACSAPPGAAPPAAAASPPASPAPAS. Over residues 308 to 318 the composition is skewed to acidic residues; sequence QEEEEDDEEDA.

Belongs to the IER family.

The protein is Immediate early response gene 5-like protein (IER5L) of Homo sapiens (Human).